The sequence spans 617 residues: uncharacterized protein (617 aa).

A helical transmembrane segment spans residues Ala10–Val30. The disordered stretch occupies residues Glu34 to Gln58. Polar residues predominate over residues Ser43–Ser53. A coiled-coil region spans residues Val60–Thr86. Residues Met473–Phe493 form a helical membrane-spanning segment. The span at Ser511–Ser529 shows a compositional bias: low complexity. A disordered region spans residues Ser511–Ser617. Residues Ser531–Arg543 show a composition bias toward basic and acidic residues. Residues Val563–Gln584 show a composition bias toward polar residues. Residues Gly590–Phe599 show a composition bias toward gly residues.

The protein localises to the membrane. This is an uncharacterized protein from Arabidopsis thaliana (Mouse-ear cress).